A 366-amino-acid chain; its full sequence is Protein sigma-NS (366 aa).

The tract at residues 1–11 is important for ssRNA-binding and formation of complexes; it reads MASSLRAAISK.

This sequence belongs to the orthoreovirus sigma-NS protein family. As to quaternary structure, homooligomer; in presence of RNA. Interacts with protein mu-NS; this interaction allows the localization of sigma-NS to the viral factories. Interacts with host G3BP1 (via C-terminus); this interaction induces the relocalization of G3BP1 and other SG proteins to the viral factories periphery.

Its subcellular location is the host cytoplasm. Protein that binds to ssRNA and participates with protein mu-NS in forming the matrix of viral factories, which are large inclusions in the host cytoplasm where replication intermediates are assembled and viral RNA replication takes place. Plays a role in the inhibition of the integrated stress response (ISR) to escape from host cell translational shutoff. Participates in the disruption of stress granules (SG) through its association with host G3BP1 and mu-NS. In Mammalia (T1L), this protein is Protein sigma-NS (S3).